A 319-amino-acid polypeptide reads, in one-letter code: L-lactate dehydrogenase 2 (319 aa).

NAD(+)-binding positions include valine 17, aspartate 38, lysine 43, tyrosine 69, and glycine 83–alanine 84. Substrate is bound by residues glutamine 86 and arginine 92. Residues serine 105, alanine 122–asparagine 124, and serine 147 contribute to the NAD(+) site. Asparagine 124 to aspartate 127 contacts substrate. Position 152–155 (aspartate 152–arginine 155) interacts with substrate. The beta-D-fructose 1,6-bisphosphate site is built by arginine 157 and histidine 172. Histidine 179 acts as the Proton acceptor in catalysis. Tyrosine 224 is subject to Phosphotyrosine. Threonine 233 is a binding site for substrate.

Belongs to the LDH/MDH superfamily. LDH family. In terms of assembly, homotetramer.

The protein resides in the cytoplasm. The catalysed reaction is (S)-lactate + NAD(+) = pyruvate + NADH + H(+). The protein operates within fermentation; pyruvate fermentation to lactate; (S)-lactate from pyruvate: step 1/1. With respect to regulation, allosterically activated by fructose 1,6-bisphosphate (FBP). Catalyzes the conversion of lactate to pyruvate. The polypeptide is L-lactate dehydrogenase 2 (Peribacillus psychrosaccharolyticus (Bacillus psychrosaccharolyticus)).